The primary structure comprises 156 residues: Melatonin receptor type 1A (156 aa).

3 helical membrane-spanning segments follow: residues 19-39, 62-82, and 115-135; these read LCYV…NLQT, TIAL…FCYL, and FVVF…GLIV.

This sequence belongs to the G-protein coupled receptor 1 family. In terms of tissue distribution, at least in the brain, more precisely in the pars tuberalis and the suprachiasmatic nucleus.

It is found in the cell membrane. High affinity receptor for melatonin. Likely to mediate the reproductive and circadian actions of melatonin. The activity of this receptor is mediated by pertussis toxin sensitive G proteins that inhibit adenylate cyclase activity. Possibly involved in sleep induction, by melatonin activation of the potassium channel KCNMA1/BK and the dissociation of G-beta and G-gamma subunits, thereby decreasing synaptic transmission. In Rattus norvegicus (Rat), this protein is Melatonin receptor type 1A (Mtnr1a).